Consider the following 311-residue polypeptide: Aurora kinase (311 aa).

The region spanning 20–300 is the Protein kinase domain; that stretch reads FEIGRFLGRG…IEDILRHPFL (281 aa). Lys-49 lines the ATP pocket. Residue Asp-143 is the Proton acceptor of the active site. The interval 189 to 216 is activation loop; sequence DFGWSVHHPTHGGRRRTQCGTLDYLPPE. Phosphothreonine; by autocatalysis is present on Thr-205. Residues 280-299 carry the Destruction (D)-box motif; it reads MLIRSPEARISIEDILRHPF.

The protein belongs to the protein kinase superfamily. Ser/Thr protein kinase family. Aurora subfamily. As to quaternary structure, interacts with EB1 (via C-terminal residues 101-238). Post-translationally, phosphorylated in mitosis and cytokinesis. Activated by autophosphorylation at Thr-205.

It is found in the nucleus. It localises to the cytoplasm. Its subcellular location is the cytoskeleton. The protein resides in the microtubule organizing center. The protein localises to the centrosome. It is found in the spindle. It localises to the spindle pole. Its subcellular location is the nucleus membrane. It carries out the reaction L-seryl-[protein] + ATP = O-phospho-L-seryl-[protein] + ADP + H(+). The enzyme catalyses L-threonyl-[protein] + ATP = O-phospho-L-threonyl-[protein] + ADP + H(+). Its activity is regulated as follows. Activated by cell-cycle phase specific phosphorylation. Inhibited by ATP-competitive inhibitors N-[4-[[6-Methoxy-7-[3-(4-morpholinyl)propoxy]-4-quinazolinyl]amino]phenyl]benzamide (ZM447439) and cyclopropanecarboxylic acid-(3-(4-(3-trifluoromethylphenylamino)-pyrimidin-2-ylamino)-phenyl)-amide (CFPPA). Inhibition leads to reduced growth, increased cytokinesis, microtubular defects, and increased ploidy of the cells. Functionally, involved in regulation of the cell cycle. Required for mitotic cell division and cytokinesis. Based on its localization to centrosomes and spindle microtubules, as well as to various cytoskeletal components such as the median body, parental attachment disk, and anterior and posterior-lateral paraflagellar dense rods, may coordinate reorganization and segregation of tubulin-containing structures during mitosis and cytokinesis. May regulate microtubule disassembly by phosphorylating cytoskeletal proteins leading to their destabilization. Phosphorylates EB1 at 'Ser-148' in vitro. Phosphorylates histone H3 in vitro. The protein is Aurora kinase of Giardia intestinalis (strain ATCC 50803 / WB clone C6) (Giardia lamblia).